The primary structure comprises 427 residues: MGDARDNEAYEEELLDYEEEDEKVPDSGNKVNGEAVKKGYVGIHSSGFRDFLLKPELLRAIVDSGFEHPSEVQHECIPQAILGMDVICQAKSGMGKTAVFVLSTLQQIEPSPGQVSALVLCHTRELAYQICNEFVRFSTYLPDTKVSVFYGGVNIKIHKDLLKNECPHIVVGTPGRVLALAREKDLSLKNVRHFILDECDKMLESLDMRRDVQEIFKMTPHDKQVMMFSATLSKEIRPVCKKFMQDPMEIYVDDEAKLTLHGLVQHYIKLSEMEKNRKLNDLLDALDFNQVVIFVKSVSRAAELNKLLVECNFPSICIHSGMSQEERLTRYKSFKEGHKRILVATDLVGRGIDIERVNIVINYDMPDSADTYLHRVGRAGRFGTKGLAITFVASASDSEVLNQVQERFEVDIKELPEQIDTSTYMPS.

Positions 1–30 (MGDARDNEAYEEELLDYEEEDEKVPDSGNK) are disordered. The span at 9–23 (AYEEELLDYEEEDEK) shows a compositional bias: acidic residues. The Q motif signature appears at 46–74 (SGFRDFLLKPELLRAIVDSGFEHPSEVQH). The Helicase ATP-binding domain occupies 77–250 (IPQAILGMDV…KKFMQDPMEI (174 aa)). 90-97 (AKSGMGKT) provides a ligand contact to ATP. Residues 197-200 (DECD) carry the DECD box motif. The region spanning 278-423 (KLNDLLDALD…ELPEQIDTST (146 aa)) is the Helicase C-terminal domain.

This sequence belongs to the DEAD box helicase family. DECD subfamily. In terms of assembly, interacts with ALY2 and MOS11.

It localises to the nucleus. The catalysed reaction is ATP + H2O = ADP + phosphate + H(+). In terms of biological role, ATP-dependent RNA helicase involved in pre-mRNA splicing. Required for the export of mRNA out of the nucleus. In addition to ssRNA and dsRNA, binds dsDNA, but not ssDNA. The protein is DEAD-box ATP-dependent RNA helicase 56 (RH56) of Arabidopsis thaliana (Mouse-ear cress).